A 526-amino-acid polypeptide reads, in one-letter code: Acid-sensing ion channel 1 (526 aa).

Topologically, residues 1 to 49 (MELKTEEEEVGGVQPVSIQAFASSSTLHGLAHIFSYERLSLKRALWALC) are cytoplasmic. A helical transmembrane segment spans residues 50–66 (FLGSLAVLLCVCTERVQ). Over 67 to 425 (YYFCYHHVTK…ETIEQKKAYE (359 aa)) the chain is Extracellular. Intrachain disulfides connect Cys-93–Cys-194, Cys-172–Cys-179, Cys-290–Cys-365, Cys-308–Cys-361, Cys-312–Cys-359, Cys-321–Cys-343, and Cys-323–Cys-335. N-linked (GlcNAc...) asparagine glycans are attached at residues Asn-366 and Asn-393. The discontinuously helical transmembrane segment at 426–456 (IAGLLGDIGGQMGLFIGASILTVLELFDYAY) threads the bilayer. The short motif at 442–444 (GAS) is the GAS motif; ion selectivity filter element. Residues 457–526 (EVIKHRLCRR…ARGTFEDFTC (70 aa)) lie on the Cytoplasmic side of the membrane. At Ser-477 the chain carries Phosphoserine; by PKA. Ser-497 bears the Phosphoserine mark.

The protein belongs to the amiloride-sensitive sodium channel (TC 1.A.6) family. ASIC1 subfamily. As to quaternary structure, homotrimer. Heterotrimer; with other ASIC proteins producing channel with different properties. Interacts with PICK1; regulates ASIC1 clustering in membranes. Interacts with STOM; alters heterotrimeric ASIC channels activity. In terms of processing, pH-gating could be regulated by serine proteases. Post-translationally, phosphorylation by PKA regulates interaction with PICK1 and subcellular localization. Phosphorylation by PKC may regulate the channel. In terms of tissue distribution, expressed in brain areas receiving strong excitatory corticofugal input. In hippocampus, expressed in the hilus of the dentate gyrus. In the cerebral cortex expressed in anterior and posterior cingulate cortex, sensory and motor cortices. In the sensory cortex strongest expression is detected in the whisker barrel field. In sensorimotor and cingulate cortex expression is elevated in layer III. Also expressed in basal ganglia, striatum, ventral pallidum, olfactory tubercle, and nucleus accumbens. Weakly expressed in thalamus with the exception of the habenula and the medial septal nuclei. In olfactory bulb, preferentially expressed in the glomerular layer, within glomeruli. Expressed in cerebellum in the molecular and granule cell layers. Strongly expressed in amygdala complex, particularly in the lateral and basolateral nuclei. Isoform 1 is more abundant in brain compared to isoform 2 (at protein level). Expressed in the nodose ganglion and dorsal root ganglion. Expressed in dendritic spine cells.

It localises to the cell membrane. The protein localises to the postsynaptic cell membrane. The protein resides in the cell projection. It is found in the dendrite. It catalyses the reaction Na(+)(in) = Na(+)(out). The catalysed reaction is Ca(2+)(in) = Ca(2+)(out). It carries out the reaction K(+)(in) = K(+)(out). The enzyme catalyses Li(+)(in) = Li(+)(out). With respect to regulation, inhibited by the diuretic drug amiloride. The activity of the channel is sensitive to rapid decrease in osmotic pressure. Forms voltage-independent, pH-gated trimeric sodium channels that act as postsynaptic excitatory receptors in the nervous system, playing a crucial role in regulating synaptic plasticity, learning, and memory. Upon extracellular pH drop this channel elicits transient, fast activating, and completely desensitizing inward currents. Displays high selectivity for sodium ions but can also permit the permeation of other cations. Regulates more or less directly intracellular calcium concentration and CaMKII phosphorylation, and thereby the density of dendritic spines. Modulates neuronal activity in the circuits underlying innate fear. Functionally, has high selectivity for sodium ions but is also potentially permeable to other cations including potassium. Could function in cochlear mechanoelectrical transduction. The protein is Acid-sensing ion channel 1 of Mus musculus (Mouse).